Consider the following 266-residue polypeptide: Large ribosomal subunit protein uL3 (266 aa).

The tract at residues 124 to 149 (NQKIGPKSHGGGGGSKPVRQTGSLGD) is disordered.

It belongs to the universal ribosomal protein uL3 family. In terms of assembly, part of the 50S ribosomal subunit. Forms a cluster with proteins L14 and L19.

One of the primary rRNA binding proteins, it binds directly near the 3'-end of the 23S rRNA, where it nucleates assembly of the 50S subunit. In Mycoplasmopsis pulmonis (strain UAB CTIP) (Mycoplasma pulmonis), this protein is Large ribosomal subunit protein uL3.